A 201-amino-acid chain; its full sequence is Recombination protein RecR (201 aa).

The C4-type zinc-finger motif lies at 59–74 (CEICGNMDTENICRIC). The Toprim domain maps to 82 to 177 (SIIAIVETVA…KISRLASGIP (96 aa)).

The protein belongs to the RecR family.

Its function is as follows. May play a role in DNA repair. It seems to be involved in an RecBC-independent recombinational process of DNA repair. It may act with RecF and RecO. The chain is Recombination protein RecR from Rickettsia rickettsii (strain Iowa).